We begin with the raw amino-acid sequence, 449 residues long: Tubulin beta chain (449 aa).

Residues Q11, E71, S140, G144, T145, G146, N206, and N228 each contribute to the GTP site. Residue E71 participates in Mg(2+) binding.

It belongs to the tubulin family. Dimer of alpha and beta chains. A typical microtubule is a hollow water-filled tube with an outer diameter of 25 nm and an inner diameter of 15 nM. Alpha-beta heterodimers associate head-to-tail to form protofilaments running lengthwise along the microtubule wall with the beta-tubulin subunit facing the microtubule plus end conferring a structural polarity. Microtubules usually have 13 protofilaments but different protofilament numbers can be found in some organisms and specialized cells. The cofactor is Mg(2+).

The protein resides in the cytoplasm. Its subcellular location is the cytoskeleton. In terms of biological role, tubulin is the major constituent of microtubules, a cylinder consisting of laterally associated linear protofilaments composed of alpha- and beta-tubulin heterodimers. Microtubules grow by the addition of GTP-tubulin dimers to the microtubule end, where a stabilizing cap forms. Below the cap, tubulin dimers are in GDP-bound state, owing to GTPase activity of alpha-tubulin. In Cicer arietinum (Chickpea), this protein is Tubulin beta chain (TUBB).